A 339-amino-acid chain; its full sequence is Pyrimidine monooxygenase RutA (339 aa).

Residues I26 to K27, N92, E101, R117 to Y118, and S167 contribute to the FMN site.

This sequence belongs to the NtaA/SnaA/DszA monooxygenase family. RutA subfamily.

The catalysed reaction is uracil + FMNH2 + NADH + O2 = (Z)-3-ureidoacrylate + FMN + NAD(+) + H2O + H(+). It carries out the reaction thymine + FMNH2 + NADH + O2 = (Z)-2-methylureidoacrylate + FMN + NAD(+) + H2O + H(+). In terms of biological role, catalyzes the pyrimidine ring opening between N-3 and C-4 by an unusual flavin hydroperoxide-catalyzed mechanism, adding oxygen atoms in the process to yield ureidoacrylate peracid, that immediately reacts with FMN forming ureidoacrylate and FMN-N(5)-oxide. The FMN-N(5)-oxide reacts spontaneously with NADH to produce FMN. Requires the flavin reductase RutF to regenerate FMN in vivo. This Cronobacter sakazakii (strain ATCC BAA-894) (Enterobacter sakazakii) protein is Pyrimidine monooxygenase RutA.